The primary structure comprises 407 residues: Myeloid cell nuclear differentiation antigen (407 aa).

The 88-residue stretch at 1 to 88 (MANEYKKILL…VNNLRKERSK (88 aa)) folds into the Pyrin domain. Positions 122–211 (LTSEVGERIP…TRRNVPQKDP (90 aa)) are disordered. Residues 131-137 (PVAQKRK) carry the Nuclear localization signal motif. Low complexity predominate over residues 177–199 (HTSSSTPSNTSFAQNQQTQAQCQ). The region spanning 196 to 394 (AQCQVDTRRN…CGSHSFIKVI (199 aa)) is the HIN-200 domain.

Participates in a ternary complex with YY1 and the YY1 target DNA element. Binds nucleolin and nucleophosmin/NPM/B23.

Its subcellular location is the nucleus. It localises to the cytoplasm. May act as a transcriptional activator/repressor in the myeloid lineage. Plays a role in the granulocyte/monocyte cell-specific response to interferon. Stimulates the DNA binding of the transcriptional repressor protein YY1. The protein is Myeloid cell nuclear differentiation antigen (MNDA) of Macaca fascicularis (Crab-eating macaque).